Here is a 283-residue protein sequence, read N- to C-terminus: Pantothenate synthetase (283 aa).

30–37 (MGALHEGH) contributes to the ATP binding site. His37 serves as the catalytic Proton donor. Gln61 lines the (R)-pantoate pocket. Residue Gln61 participates in beta-alanine binding. 147–150 (GEKD) is an ATP binding site. Gln153 is a binding site for (R)-pantoate. ATP is bound by residues Val176 and 184-187 (VSSR).

It belongs to the pantothenate synthetase family. As to quaternary structure, homodimer.

The protein resides in the cytoplasm. The enzyme catalyses (R)-pantoate + beta-alanine + ATP = (R)-pantothenate + AMP + diphosphate + H(+). It participates in cofactor biosynthesis; (R)-pantothenate biosynthesis; (R)-pantothenate from (R)-pantoate and beta-alanine: step 1/1. Its function is as follows. Catalyzes the condensation of pantoate with beta-alanine in an ATP-dependent reaction via a pantoyl-adenylate intermediate. The sequence is that of Pantothenate synthetase from Chlorobium luteolum (strain DSM 273 / BCRC 81028 / 2530) (Pelodictyon luteolum).